We begin with the raw amino-acid sequence, 162 residues long: Caveolin-2 (162 aa).

Residues 1-86 lie on the Cytoplasmic side of the membrane; sequence MGLETEKADV…FEISKYVMYK (86 aa). Tyr-19 is subject to Phosphotyrosine; by SRC. A phosphoserine mark is found at Ser-20 and Ser-23. Position 27 is a phosphotyrosine (Tyr-27). Residue Ser-36 is modified to Phosphoserine. Positions 87-107 form an intramembrane region, helical; sequence FLTVFLAIPLAFIAGILFATL. Residues 108–162 are Cytoplasmic-facing; that stretch reads SCLHIWILMPFVKTCLMVLPSVQTIWKSVTDVVIGPLCTSVGRSFSSVSMQLSHD.

This sequence belongs to the caveolin family. As to quaternary structure, monomer or homodimer. Interacts with CAV1; the interaction forms a stable heterooligomeric complex that is required for targeting to lipid rafts and for caveolae formation. Tyrosine phosphorylated forms do not form heterooligomers with the Tyr-19-phosphorylated form existing as a monomer or dimer, and the Tyr-27-form as a monomer only. Interacts (tyrosine phosphorylated form) with the SH2 domain-containing proteins, RASA1, NCK1 and SRC. Interacts (tyrosine phosphorylated form) with INSR, the interaction (Tyr-27-phosphorylated form) is increased on insulin stimulation. Interacts (Tyr-19 phosphorylated form) with MAPK1 (phosphorylated form); the interaction, promoted by insulin, leads to nuclear location and MAPK1 activation. Interacts with STAT3; the interaction is increased on insulin-induced tyrosine phosphorylation leading to STAT activation. Post-translationally, phosphorylated on serine and tyrosine residues. CAV1 promotes phosphorylation on Ser-23 which then targets the complex to the plasma membrane, lipid rafts and caveolae. Phosphorylation on Ser-36 appears to modulate mitosis in endothelial cells. Phosphorylation on both Tyr-19 and Tyr-27 is required for insulin-induced 'Ser-727' phosphorylation of STAT3 and its activation. Phosphorylation on Tyr-19 is required for insulin-induced phosphorylation of MAPK1 and DNA binding of STAT3. Tyrosine phosphorylation is induced by both EGF and insulin.

It is found in the nucleus. It localises to the cytoplasm. The protein resides in the golgi apparatus membrane. Its subcellular location is the cell membrane. The protein localises to the membrane. It is found in the caveola. Its function is as follows. May act as a scaffolding protein within caveolar membranes. Interacts directly with G-protein alpha subunits and can functionally regulate their activity. Acts as an accessory protein in conjunction with CAV1 in targeting to lipid rafts and driving caveolae formation. The Ser-36 phosphorylated form has a role in modulating mitosis in endothelial cells. Positive regulator of cellular mitogenesis of the MAPK signaling pathway. Required for the insulin-stimulated nuclear translocation and activation of MAPK1 and STAT3, and the subsequent regulation of cell cycle progression. The chain is Caveolin-2 (Cav2) from Mus musculus (Mouse).